A 332-amino-acid chain; its full sequence is Methylthioribose-1-phosphate isomerase (332 aa).

Substrate contacts are provided by residues 44–46 (RGA), Arg87, and Gln192. Residue Asp233 is the Proton donor of the active site. 243–244 (NK) is a binding site for substrate.

Belongs to the eIF-2B alpha/beta/delta subunits family. MtnA subfamily.

The enzyme catalyses 5-(methylsulfanyl)-alpha-D-ribose 1-phosphate = 5-(methylsulfanyl)-D-ribulose 1-phosphate. It functions in the pathway amino-acid biosynthesis; L-methionine biosynthesis via salvage pathway; L-methionine from S-methyl-5-thio-alpha-D-ribose 1-phosphate: step 1/6. Catalyzes the interconversion of methylthioribose-1-phosphate (MTR-1-P) into methylthioribulose-1-phosphate (MTRu-1-P). This Dehalococcoides mccartyi (strain CBDB1) protein is Methylthioribose-1-phosphate isomerase.